The chain runs to 165 residues: Ribosome maturation factor RimM (165 aa).

Positions Glu89–Trp161 constitute a PRC barrel domain.

This sequence belongs to the RimM family. As to quaternary structure, binds ribosomal protein uS19.

It is found in the cytoplasm. In terms of biological role, an accessory protein needed during the final step in the assembly of 30S ribosomal subunit, possibly for assembly of the head region. Essential for efficient processing of 16S rRNA. May be needed both before and after RbfA during the maturation of 16S rRNA. It has affinity for free ribosomal 30S subunits but not for 70S ribosomes. This Clostridium botulinum (strain Alaska E43 / Type E3) protein is Ribosome maturation factor RimM.